A 210-amino-acid chain; its full sequence is DNA replication complex GINS protein PSF3 (210 aa).

This sequence belongs to the GINS3/PSF3 family. As to quaternary structure, component of the GINS complex which is a heterotetramer of gins1/psf1, gins2/psf2, gins3/psf3 and gins4/sld5. Component of the CMG helicase complex, composed of the mcm2-7 complex, the GINS complex and cdc45.

It localises to the nucleus. The protein localises to the chromosome. Its function is as follows. Required for correct functioning of the GINS complex, a complex that plays an essential role in the initiation of DNA replication, and progression of DNA replication forks. GINS complex is a core component of CDC45-MCM-GINS (CMG) helicase, the molecular machine that unwinds template DNA during replication, and around which the replisome is built. This Xenopus laevis (African clawed frog) protein is DNA replication complex GINS protein PSF3.